The sequence spans 423 residues: uncharacterized protein (423 aa).

Belongs to the mycobacterial PPE family.

Functionally, could be required for host endothelial-cell invasion and/or intracellular survival. This is an uncharacterized protein from Mycobacterium tuberculosis (strain CDC 1551 / Oshkosh).